The following is a 120-amino-acid chain: NAD(P)H-quinone oxidoreductase subunit 3, chloroplastic (120 aa).

A run of 3 helical transmembrane segments spans residues 9-29 (FFWA…FISG), 64-84 (MFAL…PWAM), and 88-108 (VLGV…IIGL).

It belongs to the complex I subunit 3 family. NDH is composed of at least 16 different subunits, 5 of which are encoded in the nucleus.

It localises to the plastid. The protein resides in the chloroplast thylakoid membrane. The enzyme catalyses a plastoquinone + NADH + (n+1) H(+)(in) = a plastoquinol + NAD(+) + n H(+)(out). The catalysed reaction is a plastoquinone + NADPH + (n+1) H(+)(in) = a plastoquinol + NADP(+) + n H(+)(out). Its function is as follows. NDH shuttles electrons from NAD(P)H:plastoquinone, via FMN and iron-sulfur (Fe-S) centers, to quinones in the photosynthetic chain and possibly in a chloroplast respiratory chain. The immediate electron acceptor for the enzyme in this species is believed to be plastoquinone. Couples the redox reaction to proton translocation, and thus conserves the redox energy in a proton gradient. The polypeptide is NAD(P)H-quinone oxidoreductase subunit 3, chloroplastic (Atropa belladonna (Belladonna)).